Reading from the N-terminus, the 309-residue chain is Aspartate carbamoyltransferase catalytic subunit (309 aa).

Residues R55 and T56 each coordinate carbamoyl phosphate. K85 lines the L-aspartate pocket. Residues R106, H135, and Q138 each coordinate carbamoyl phosphate. Residues R168 and R230 each contribute to the L-aspartate site. Carbamoyl phosphate is bound by residues L268 and P269.

This sequence belongs to the aspartate/ornithine carbamoyltransferase superfamily. ATCase family. As to quaternary structure, heterododecamer (2C3:3R2) of six catalytic PyrB chains organized as two trimers (C3), and six regulatory PyrI chains organized as three dimers (R2).

The enzyme catalyses carbamoyl phosphate + L-aspartate = N-carbamoyl-L-aspartate + phosphate + H(+). It functions in the pathway pyrimidine metabolism; UMP biosynthesis via de novo pathway; (S)-dihydroorotate from bicarbonate: step 2/3. Catalyzes the condensation of carbamoyl phosphate and aspartate to form carbamoyl aspartate and inorganic phosphate, the committed step in the de novo pyrimidine nucleotide biosynthesis pathway. The protein is Aspartate carbamoyltransferase catalytic subunit of Vibrio vulnificus (strain YJ016).